The following is a 181-amino-acid chain: ATP synthase subunit b, chloroplastic (181 aa).

Residues Ile28 to Leu50 traverse the membrane as a helical segment.

The protein belongs to the ATPase B chain family. F-type ATPases have 2 components, F(1) - the catalytic core - and F(0) - the membrane proton channel. F(1) has five subunits: alpha(3), beta(3), gamma(1), delta(1), epsilon(1). F(0) has four main subunits: a(1), b(1), b'(1) and c(10-14). The alpha and beta chains form an alternating ring which encloses part of the gamma chain. F(1) is attached to F(0) by a central stalk formed by the gamma and epsilon chains, while a peripheral stalk is formed by the delta, b and b' chains.

Its subcellular location is the plastid. The protein localises to the chloroplast thylakoid membrane. In terms of biological role, f(1)F(0) ATP synthase produces ATP from ADP in the presence of a proton or sodium gradient. F-type ATPases consist of two structural domains, F(1) containing the extramembraneous catalytic core and F(0) containing the membrane proton channel, linked together by a central stalk and a peripheral stalk. During catalysis, ATP synthesis in the catalytic domain of F(1) is coupled via a rotary mechanism of the central stalk subunits to proton translocation. Functionally, component of the F(0) channel, it forms part of the peripheral stalk, linking F(1) to F(0). In Cryptomeria japonica (Japanese cedar), this protein is ATP synthase subunit b, chloroplastic.